The sequence spans 688 residues: Polyribonucleotide nucleotidyltransferase (688 aa).

D484 and D490 together coordinate Mg(2+). A KH domain is found at 550–609; it reads PTTEIFNVAPDKIVEIIGQGGRVIREIVEKFEVKIDLNKPSGEVKIMGNKERVLKTKEFI. The 63-residue stretch at 626–688 folds into the S1 motif domain; the sequence is DEVLEAQVKR…NKGKIALDLA (63 aa).

Belongs to the polyribonucleotide nucleotidyltransferase family. The cofactor is Mg(2+).

It is found in the cytoplasm. It catalyses the reaction RNA(n+1) + phosphate = RNA(n) + a ribonucleoside 5'-diphosphate. Its function is as follows. Involved in mRNA degradation. Catalyzes the phosphorolysis of single-stranded polyribonucleotides processively in the 3'- to 5'-direction. The protein is Polyribonucleotide nucleotidyltransferase of Helicobacter pylori (strain Shi470).